The chain runs to 779 residues: Transcription activator of gluconeogenesis BDCG_02812 (779 aa).

The interval 1–70 is disordered; that stretch reads MTASTRNGSP…NAKDPLRPRR (70 aa). Residues 25–61 show a composition bias toward polar residues; the sequence is KSMTTTPANPPETKSQTNGKGSGTAQSSQKPASTSAN. A DNA-binding region (zn(2)-C6 fungal-type) is located at residues 77–105; the sequence is CFACQRAHLTCGDERPCQRCIKRGLQDAC. 6 disordered regions span residues 135–163, 202–239, 285–344, 401–421, 559–590, and 655–732; these read QANT…QSVS, SVFH…SVSG, GAGD…ANPR, TNLM…PGLK, GSSL…PHTG, and FHGK…QTWG. Over residues 202-226 the composition is skewed to polar residues; the sequence is SVFHAQSPSSTQNFDLSSNPQTQNL. A compositionally biased stretch (low complexity) spans 227-238; sequence SSAMSQTASSVS. Polar residues-rich tracts occupy residues 291 to 322, 333 to 344, and 401 to 416; these read PSDS…NQSP, WNPTGQGQANPR, and TNLM…SRIS. Residues 560–572 are compositionally biased toward low complexity; the sequence is SSLSSASSVRGSS. Residues 573-586 are compositionally biased toward polar residues; that stretch reads TFTPRNNNTHNSID. The span at 672–719 shows a compositional bias: low complexity; that stretch reads TGTTTSGDVATTTATGTSTSNGANANTNGNNTNPNDPSSAASSSASSA. The span at 720–729 shows a compositional bias: polar residues; the sequence is LQGPQQSPRQ.

The protein belongs to the ERT1/acuK family.

It localises to the nucleus. Transcription factor which regulates nonfermentable carbon utilization. Activator of gluconeogenetic genes. This is Transcription activator of gluconeogenesis BDCG_02812 from Ajellomyces dermatitidis (strain ER-3 / ATCC MYA-2586) (Blastomyces dermatitidis).